The primary structure comprises 143 residues: uncharacterized protein (143 aa).

Residues Met-1 to Ala-27 form the signal peptide.

This is an uncharacterized protein from Mycobacterium tuberculosis (strain CDC 1551 / Oshkosh).